Reading from the N-terminus, the 341-residue chain is Tetraacyldisaccharide 4'-kinase (341 aa).

54–61 lines the ATP pocket; the sequence is TVGGTGKT.

The protein belongs to the LpxK family.

It catalyses the reaction a lipid A disaccharide + ATP = a lipid IVA + ADP + H(+). The protein operates within glycolipid biosynthesis; lipid IV(A) biosynthesis; lipid IV(A) from (3R)-3-hydroxytetradecanoyl-[acyl-carrier-protein] and UDP-N-acetyl-alpha-D-glucosamine: step 6/6. Functionally, transfers the gamma-phosphate of ATP to the 4'-position of a tetraacyldisaccharide 1-phosphate intermediate (termed DS-1-P) to form tetraacyldisaccharide 1,4'-bis-phosphate (lipid IVA). This chain is Tetraacyldisaccharide 4'-kinase, found in Mesorhizobium japonicum (strain LMG 29417 / CECT 9101 / MAFF 303099) (Mesorhizobium loti (strain MAFF 303099)).